Here is a 157-residue protein sequence, read N- to C-terminus: DNA gyrase inhibitor (157 aa).

It belongs to the DNA gyrase inhibitor family. Interacts with DNA gyrase.

The protein localises to the cytoplasm. Inhibits the supercoiling activity of DNA gyrase. Acts by inhibiting DNA gyrase at an early step, prior to (or at the step of) binding of DNA by the gyrase. It protects cells against toxins that target DNA gyrase, by inhibiting activity of these toxins and reducing the formation of lethal double-strand breaks in the cell. The polypeptide is DNA gyrase inhibitor (Klebsiella pneumoniae (strain 342)).